The following is a 259-amino-acid chain: Ribonuclease HII (259 aa).

A disordered region spans residues 1–26 (MLSTPPKLPSAHGPVHFPRRSGTGMN). In terms of domain architecture, RNase H type-2 spans 55-243 (APVAGADEAG…VRAQQLVLFE (189 aa)). 3 residues coordinate a divalent metal cation: D61, E62, and D152.

This sequence belongs to the RNase HII family. It depends on Mn(2+) as a cofactor. Mg(2+) is required as a cofactor.

It localises to the cytoplasm. The catalysed reaction is Endonucleolytic cleavage to 5'-phosphomonoester.. Endonuclease that specifically degrades the RNA of RNA-DNA hybrids. This Azorhizobium caulinodans (strain ATCC 43989 / DSM 5975 / JCM 20966 / LMG 6465 / NBRC 14845 / NCIMB 13405 / ORS 571) protein is Ribonuclease HII.